The chain runs to 163 residues: Putative pre-16S rRNA nuclease (163 aa).

The protein belongs to the YqgF nuclease family.

It is found in the cytoplasm. In terms of biological role, could be a nuclease involved in processing of the 5'-end of pre-16S rRNA. This is Putative pre-16S rRNA nuclease from Nitrobacter hamburgensis (strain DSM 10229 / NCIMB 13809 / X14).